We begin with the raw amino-acid sequence, 481 residues long: uncharacterized protein (481 aa).

The protein belongs to the metallophosphoesterase superfamily.

This is an uncharacterized protein from Bacillus subtilis (strain 168).